The following is a 483-amino-acid chain: Glutamyl-tRNA(Gln) amidotransferase subunit A (483 aa).

Residues K77 and S152 each act as charge relay system in the active site. The Acyl-ester intermediate role is filled by S176.

The protein belongs to the amidase family. GatA subfamily. Heterotrimer of A, B and C subunits.

The catalysed reaction is L-glutamyl-tRNA(Gln) + L-glutamine + ATP + H2O = L-glutaminyl-tRNA(Gln) + L-glutamate + ADP + phosphate + H(+). Functionally, allows the formation of correctly charged Gln-tRNA(Gln) through the transamidation of misacylated Glu-tRNA(Gln) in organisms which lack glutaminyl-tRNA synthetase. The reaction takes place in the presence of glutamine and ATP through an activated gamma-phospho-Glu-tRNA(Gln). The polypeptide is Glutamyl-tRNA(Gln) amidotransferase subunit A (Listeria monocytogenes serotype 4a (strain HCC23)).